We begin with the raw amino-acid sequence, 166 residues long: Large ribosomal subunit protein uL10 (166 aa).

Part of the ribosomal stalk of the 50S ribosomal subunit. The N-terminus interacts with L11 and 23S rRNA to form the base of the stalk. The C-terminus forms an elongated spine to which L12 dimers bind in a sequential fashion forming a pentameric L10(L12)2(L12)2 complex.

Forms part of the ribosomal stalk, playing a central role in the interaction of the ribosome with GTP-bound translation factors (such as IF-2, EF-Tu, EF-G and RF3). This Bacillus subtilis (strain 168) protein is Large ribosomal subunit protein uL10 (rplJ).